Here is a 337-residue protein sequence, read N- to C-terminus: Cytoskeleton protein RodZ (337 aa).

Topologically, residues 1–111 are cytoplasmic; it reads MNTEATHDQN…LGKRRKKRDG (111 aa). In terms of domain architecture, HTH cro/C1-type spans 19–71; that stretch reads LRNAREQLGLSQQAVAERLCLKVSTVRDIEEDKAPADLASTFLRGYIRSYARL. A DNA-binding region (H-T-H motif) is located at residues 30–49; that stretch reads QQAVAERLCLKVSTVRDIEE. A helical; Signal-anchor for type II membrane protein membrane pass occupies residues 112 to 132; that stretch reads WLMTFTWLVLFVVIGLSGAWW. At 133–337 the chain is on the periplasmic side; the sequence is WQDHKAQQEE…TLNAEQSPAQ (205 aa). A compositionally biased stretch (polar residues) spans 145 to 167; it reads TMADQSSAELSSNSEQGQSVPLN. The segment at 145-218 is disordered; the sequence is TMADQSSAEL…AVVSPSQANV (74 aa). The segment covering 168–207 has biased composition (low complexity); sequence TSTTTDPATTSTPPASVDTTATNTQTPAVTAPAPAVDPQQ. The segment covering 208–218 has biased composition (polar residues); sequence NAVVSPSQANV.

Belongs to the RodZ family.

Its subcellular location is the cell inner membrane. Its function is as follows. Cytoskeletal protein that is involved in cell-shape control through regulation of the length of the long axis. The protein is Cytoskeleton protein RodZ of Shigella dysenteriae serotype 1 (strain Sd197).